A 692-amino-acid chain; its full sequence is Transcription factor steA (692 aa).

The DNA-binding element occupies 56 to 165; that stretch reads DQLIRRFLLP…SVPHDRLFLD (110 aa). 2 disordered regions span residues 406-507 and 519-540; these read SPTY…EQSS and LPAN…SDRY. A compositionally biased stretch (polar residues) spans 470-482; it reads RSVNSTYTATLPQ. 2 consecutive C2H2-type zinc fingers follow at residues 564 to 588 and 594 to 616; these read HSCP…VRTH and YPCP…RRIH. The tract at residues 618–665 is disordered; that stretch reads AQQDGQPLVHEDDLENDDNESVSHDEDESPSESVHPAVPGVHGMTSMP. A compositionally biased stretch (acidic residues) spans 629–647; it reads DDLENDDNESVSHDEDESP.

The protein belongs to the STE12 transcription factor family.

Its subcellular location is the nucleus. Its function is as follows. Transcription factor involved in sexual reproduction. Required for cleistothecial development and ascosporogenesis. Not required for asexual reproduction (conidiation). May act to repress medA expression. In Emericella nidulans (strain FGSC A4 / ATCC 38163 / CBS 112.46 / NRRL 194 / M139) (Aspergillus nidulans), this protein is Transcription factor steA (steA).